The following is a 498-amino-acid chain: MQNYVISLDQGTTSSRAILYDQQGNIVKSAQKEITQHYPQSSWVEHDASEIWGTQSGVLREVLETAGIRPNQIAAIGIANQRETTVIWDKESGKPIHNAIVWQDRRTAPICEELEKQGLKEYIRQNTGLVIDAYFSATKVKWLLDNVNGAREKAKNGQLLFGTVDSWLIWNLTRGHVHVTDYTNASRTMMFNIHELDWDDKILDVLDIPREMLPEIKESSEIYGYTDEHTLGGAQIPISGIAGDQQSALFGQGCFERGMMKNTYGTGCFLLMNTGKDPVISKNGLLTTIAWAIDGEIYYALEGSIFIAGAAVQWLRDNLKLIDTAHDSEYFAGKSDESNGVYVVPAFQGLGAPYWDMYARGAIMGLTRKVGKAEIVRATLESLAYQTRDVVDAMKKDSQLQLQTLRVDGGACQNNLLMQFQSDIIGTTVERPSDIETTARGAAFLAGLAVGFWDKFDLQKVQQIDNKFTPEMDSQERENRYAGWQKAVERTMGWARDS.

ADP is bound at residue Thr12. Thr12, Thr13, and Ser14 together coordinate ATP. Thr12 serves as a coordination point for sn-glycerol 3-phosphate. An ADP-binding site is contributed by Arg16. The sn-glycerol 3-phosphate site is built by Arg82, Glu83, Tyr134, and Asp244. The glycerol site is built by Arg82, Glu83, Tyr134, Asp244, and Gln245. Residues Thr266 and Gly309 each coordinate ADP. Residues Thr266, Gly309, Gln313, and Gly410 each coordinate ATP. Positions 410 and 414 each coordinate ADP.

The protein belongs to the FGGY kinase family. As to quaternary structure, homotetramer and homodimer (in equilibrium).

It catalyses the reaction glycerol + ATP = sn-glycerol 3-phosphate + ADP + H(+). It functions in the pathway polyol metabolism; glycerol degradation via glycerol kinase pathway; sn-glycerol 3-phosphate from glycerol: step 1/1. Activated by phosphorylation and inhibited by fructose 1,6-bisphosphate (FBP). Functionally, key enzyme in the regulation of glycerol uptake and metabolism. Catalyzes the phosphorylation of glycerol to yield sn-glycerol 3-phosphate. This is Glycerol kinase from Natranaerobius thermophilus (strain ATCC BAA-1301 / DSM 18059 / JW/NM-WN-LF).